The chain runs to 88 residues: Small ribosomal subunit protein uS17 (88 aa).

This sequence belongs to the universal ribosomal protein uS17 family. As to quaternary structure, part of the 30S ribosomal subunit.

In terms of biological role, one of the primary rRNA binding proteins, it binds specifically to the 5'-end of 16S ribosomal RNA. This Lactobacillus delbrueckii subsp. bulgaricus (strain ATCC 11842 / DSM 20081 / BCRC 10696 / JCM 1002 / NBRC 13953 / NCIMB 11778 / NCTC 12712 / WDCM 00102 / Lb 14) protein is Small ribosomal subunit protein uS17.